A 118-amino-acid chain; its full sequence is Small ribosomal subunit protein uS13 (118 aa).

The segment at 94-118 (SLPLRGQRTKTNARTRKGPRKPIKK) is disordered.

The protein belongs to the universal ribosomal protein uS13 family. As to quaternary structure, part of the 30S ribosomal subunit. Forms a loose heterodimer with protein S19. Forms two bridges to the 50S subunit in the 70S ribosome.

In terms of biological role, located at the top of the head of the 30S subunit, it contacts several helices of the 16S rRNA. In the 70S ribosome it contacts the 23S rRNA (bridge B1a) and protein L5 of the 50S subunit (bridge B1b), connecting the 2 subunits; these bridges are implicated in subunit movement. Contacts the tRNAs in the A and P-sites. This chain is Small ribosomal subunit protein uS13, found in Colwellia psychrerythraea (strain 34H / ATCC BAA-681) (Vibrio psychroerythus).